The sequence spans 208 residues: Urease accessory protein UreG 1 (208 aa).

Position 14–21 (14–21) interacts with GTP; sequence GPVGSGKT.

The protein belongs to the SIMIBI class G3E GTPase family. UreG subfamily. Homodimer. UreD, UreF and UreG form a complex that acts as a GTP-hydrolysis-dependent molecular chaperone, activating the urease apoprotein by helping to assemble the nickel containing metallocenter of UreC. The UreE protein probably delivers the nickel.

The protein localises to the cytoplasm. Functionally, facilitates the functional incorporation of the urease nickel metallocenter. This process requires GTP hydrolysis, probably effectuated by UreG. In terms of biological role, disruption of the ure1 gene cluster suggests that it protects brucellae during their passage through the stomach. The major route of infection in human brucellosis is oral. This Brucella abortus (strain 2308) protein is Urease accessory protein UreG 1.